The primary structure comprises 468 residues: Cysteine--tRNA ligase (468 aa).

Cys-28 serves as a coordination point for Zn(2+). A 'HIGH' region motif is present at residues 30–40 (PTVYNYIHIGN). Zn(2+) is bound by residues Cys-212, His-237, and Glu-241. A 'KMSKS' region motif is present at residues 271 to 275 (KMSKS). Residue Lys-274 participates in ATP binding.

Belongs to the class-I aminoacyl-tRNA synthetase family. As to quaternary structure, monomer. The cofactor is Zn(2+).

Its subcellular location is the cytoplasm. It catalyses the reaction tRNA(Cys) + L-cysteine + ATP = L-cysteinyl-tRNA(Cys) + AMP + diphosphate. This Lacticaseibacillus casei (strain BL23) (Lactobacillus casei) protein is Cysteine--tRNA ligase.